The primary structure comprises 147 residues: Putative nickel-responsive regulator (147 aa).

Ni(2+) contacts are provided by His76, His87, His89, and Cys95.

Belongs to the transcriptional regulatory CopG/NikR family. Ni(2+) is required as a cofactor.

Functionally, transcriptional regulator. This chain is Putative nickel-responsive regulator, found in Rhodopseudomonas palustris (strain TIE-1).